Consider the following 431-residue polypeptide: ORC1-type DNA replication protein 14 (431 aa).

ATP is bound by residues 62–66 (TGKSL), Y219, and R231.

This sequence belongs to the CDC6/cdc18 family.

Functionally, involved in regulation of DNA replication. The sequence is that of ORC1-type DNA replication protein 14 (cdc6n) from Haloarcula marismortui (strain ATCC 43049 / DSM 3752 / JCM 8966 / VKM B-1809) (Halobacterium marismortui).